Reading from the N-terminus, the 269-residue chain is Adenylate kinase (269 aa).

61-66 (GAGKGT) lines the ATP pocket. An NMP region spans residues 81 to 110 (ATGDMLREQVARQTELGKAAKQIMDQGGLV). AMP is bound by residues T82, R87, 108–110 (GLV), 137–140 (GFPR), and Q144. The segment at 178-215 (GRLVHPASGRSYHKEFNPPKKPMTDDITGEPLIQRSDD) is LID. ATP contacts are provided by residues R179 and 188 to 189 (SY). AMP is bound by residues R212 and R223. An ATP-binding site is contributed by Q251.

It belongs to the adenylate kinase family. AK2 subfamily. Monomer.

The protein resides in the cytoplasm. It localises to the cytosol. The protein localises to the mitochondrion intermembrane space. It catalyses the reaction AMP + ATP = 2 ADP. Catalyzes the reversible transfer of the terminal phosphate group between ATP and AMP. Plays an important role in cellular energy homeostasis and in adenine nucleotide metabolism. Adenylate kinase activity is critical for regulation of the phosphate utilization and the AMP de novo biosynthesis pathways. The sequence is that of Adenylate kinase from Cryptococcus neoformans var. neoformans serotype D (strain B-3501A) (Filobasidiella neoformans).